Here is a 339-residue protein sequence, read N- to C-terminus: MSLELQEHCSLKPYNTFGIDVRARLLAHARDEADVREALALARERGLPLLVIGGGSNLLLTRDVEALVLRMASQGRRIVSDAADSVLVEAEAGEAWDPFVQWSLERGLAGLENLSLIPGTVGAAPMQNIGAYGVELKDVFDSLTALDRQDGTLREFDRQACRFGYRDSLFKQEPDRWLILRVRLRLTRRERLHLDYGPVRQRLEEEGIASPTARDVSRVICAIRREKLPDPAVLGNAGSFFKNPLVDATQAERLRQAFPDLVGYPQADGRLKLAAGWLIDKGGWKGFRDGPVGVHAQQALVLVNHGGATGAQVRALAERIQEDVRRRFGVELEPEPNLY.

One can recognise an FAD-binding PCMH-type domain in the interval 18-189 (GIDVRARLLA…LRVRLRLTRR (172 aa)). R166 is an active-site residue. The Proton donor role is filled by S239. E335 is an active-site residue.

This sequence belongs to the MurB family. Requires FAD as cofactor.

Its subcellular location is the cytoplasm. The catalysed reaction is UDP-N-acetyl-alpha-D-muramate + NADP(+) = UDP-N-acetyl-3-O-(1-carboxyvinyl)-alpha-D-glucosamine + NADPH + H(+). Its pathway is cell wall biogenesis; peptidoglycan biosynthesis. In terms of biological role, cell wall formation. This is UDP-N-acetylenolpyruvoylglucosamine reductase from Pseudomonas aeruginosa (strain ATCC 15692 / DSM 22644 / CIP 104116 / JCM 14847 / LMG 12228 / 1C / PRS 101 / PAO1).